A 377-amino-acid chain; its full sequence is Putative zinc metalloprotease Atu1380 (377 aa).

Position 29 (histidine 29) interacts with Zn(2+). Glutamate 30 is an active-site residue. Histidine 33 lines the Zn(2+) pocket. 3 helical membrane passes run 118-140, 299-321, and 351-373; these read VAAG…FGIY, LGIS…LNLM, and VAFR…NDIS. A PDZ domain is found at 129 to 202; that stretch reads AILIFAVLFG…TPITVTVERA (74 aa).

This sequence belongs to the peptidase M50B family. The cofactor is Zn(2+).

It is found in the cell inner membrane. This is Putative zinc metalloprotease Atu1380 from Agrobacterium fabrum (strain C58 / ATCC 33970) (Agrobacterium tumefaciens (strain C58)).